The sequence spans 459 residues: Alpha,alpha-trehalose-phosphate synthase [UDP-forming] (459 aa).

D-glucose 6-phosphate contacts are provided by tyrosine 86 and aspartate 140. Arginine 262 and lysine 267 together coordinate UDP. UDP-alpha-D-glucose is bound by residues arginine 262 and lysine 267. Arginine 300 is a D-glucose 6-phosphate binding site. A UDP-alpha-D-glucose-binding site is contributed by aspartate 361–glutamate 369. A UDP-binding site is contributed by leucine 365–glutamate 369.

Belongs to the glycosyltransferase 20 family. In terms of assembly, component of the trehalose synthase complex.

It is found in the cytoplasm. It catalyses the reaction D-glucose 6-phosphate + UDP-alpha-D-glucose = alpha,alpha-trehalose 6-phosphate + UDP + H(+). Its function is as follows. Synthase catalytic subunit of the trehalose synthase complex that catalyzes the production of trehalose from glucose-6-phosphate and UDP-alpha-D-glucose in a two step process. Can function independently of the complex. The protein is Alpha,alpha-trehalose-phosphate synthase [UDP-forming] (TPS1) of Encephalitozoon cuniculi (strain GB-M1) (Microsporidian parasite).